Reading from the N-terminus, the 379-residue chain is Homoserine O-acetyltransferase (379 aa).

Residues 54–332 enclose the AB hydrolase-1 domain; it reads NAILVCHALS…PYQSEEIVKS (279 aa). The active-site Nucleophile is the serine 159. Residue arginine 228 coordinates substrate. Catalysis depends on residues aspartate 318 and histidine 352. Aspartate 353 contacts substrate.

This sequence belongs to the AB hydrolase superfamily. MetX family. Homodimer.

It localises to the cytoplasm. The enzyme catalyses L-homoserine + acetyl-CoA = O-acetyl-L-homoserine + CoA. It participates in amino-acid biosynthesis; L-methionine biosynthesis via de novo pathway; O-acetyl-L-homoserine from L-homoserine: step 1/1. Transfers an acetyl group from acetyl-CoA to L-homoserine, forming acetyl-L-homoserine. The chain is Homoserine O-acetyltransferase from Leptospira meyeri.